A 126-amino-acid polypeptide reads, in one-letter code: UPF0231 protein VC0395_A0134/VC395_0622 (126 aa).

Belongs to the UPF0231 family.

The polypeptide is UPF0231 protein VC0395_A0134/VC395_0622 (Vibrio cholerae serotype O1 (strain ATCC 39541 / Classical Ogawa 395 / O395)).